The sequence spans 556 residues: Urocanate hydratase (556 aa).

NAD(+) contacts are provided by residues 52-53 (GG), glutamine 130, 176-178 (GMG), glutamate 196, arginine 201, 242-243 (NA), 263-267 (QTSAH), 273-274 (YL), and tyrosine 322. Residue cysteine 410 is part of the active site. Glycine 492 contributes to the NAD(+) binding site.

This sequence belongs to the urocanase family. The cofactor is NAD(+).

The protein localises to the cytoplasm. It catalyses the reaction 4-imidazolone-5-propanoate = trans-urocanate + H2O. It participates in amino-acid degradation; L-histidine degradation into L-glutamate; N-formimidoyl-L-glutamate from L-histidine: step 2/3. Catalyzes the conversion of urocanate to 4-imidazolone-5-propionate. This chain is Urocanate hydratase, found in Acidiphilium cryptum (strain JF-5).